The chain runs to 357 residues: (4E)-oxalomesaconate Delta-isomerase (357 aa).

It belongs to the PrpF family.

It carries out the reaction (1E)-4-oxobut-1-ene-1,2,4-tricarboxylate = (3Z)-2-oxo-4-carboxy-3-hexenedioate. It functions in the pathway secondary metabolite metabolism; lignin degradation. Functionally, contributes to the degradation of lignin at the level of the protocatechuate 4,5-cleavage pathway. Catalyzes the isomerization of the double bond between C4 and C5 in (4E)-oxalomesaconate (OMA) to (3Z)-2-keto-4-carboxy-3-hexenedioate (KCH), where the double bond has migrated between C3 and C4 via a 1,3-allylic isomerization. This is (4E)-oxalomesaconate Delta-isomerase from Novosphingobium sp. (strain KA1) (Sphingomonas sp. (strain KA1)).